We begin with the raw amino-acid sequence, 401 residues long: 1-deoxy-D-xylulose 5-phosphate reductoisomerase (401 aa).

7 residues coordinate NADPH: Thr-11, Gly-12, Ser-13, Ile-14, Arg-38, Asn-39, and Asn-125. 1-deoxy-D-xylulose 5-phosphate is bound at residue Lys-126. Glu-127 serves as a coordination point for NADPH. Asp-151 contributes to the Mn(2+) binding site. Residues Ser-152, Glu-153, Ser-179, and His-202 each contribute to the 1-deoxy-D-xylulose 5-phosphate site. Glu-153 contacts Mn(2+). Position 208 (Gly-208) interacts with NADPH. 1-deoxy-D-xylulose 5-phosphate is bound by residues Ser-215, Asn-220, Lys-221, and Glu-224. Glu-224 contributes to the Mn(2+) binding site.

This sequence belongs to the DXR family. Requires Mg(2+) as cofactor. The cofactor is Mn(2+).

It catalyses the reaction 2-C-methyl-D-erythritol 4-phosphate + NADP(+) = 1-deoxy-D-xylulose 5-phosphate + NADPH + H(+). It participates in isoprenoid biosynthesis; isopentenyl diphosphate biosynthesis via DXP pathway; isopentenyl diphosphate from 1-deoxy-D-xylulose 5-phosphate: step 1/6. Its function is as follows. Catalyzes the NADPH-dependent rearrangement and reduction of 1-deoxy-D-xylulose-5-phosphate (DXP) to 2-C-methyl-D-erythritol 4-phosphate (MEP). The sequence is that of 1-deoxy-D-xylulose 5-phosphate reductoisomerase from Paraburkholderia xenovorans (strain LB400).